Consider the following 675-residue polypeptide: Potassium-transporting ATPase ATP-binding subunit 2 (675 aa).

4 helical membrane-spanning segments follow: residues isoleucine 34–isoleucine 54, leucine 65–phenylalanine 85, isoleucine 216–leucine 236, and leucine 245–glycine 265. The active-site 4-aspartylphosphate intermediate is the aspartate 304. Residues aspartate 341, glutamate 345, phenylalanine 372 to serine 379, and lysine 390 each bind ATP. Residues aspartate 513 and aspartate 517 each coordinate Mg(2+). The next 3 membrane-spanning stretches (helical) occupy residues alanine 569–methionine 591, alanine 611–methionine 631, and isoleucine 644–isoleucine 664.

This sequence belongs to the cation transport ATPase (P-type) (TC 3.A.3) family. Type IA subfamily. As to quaternary structure, the system is composed of three essential subunits: KdpA, KdpB and KdpC.

It localises to the cell membrane. The catalysed reaction is K(+)(out) + ATP + H2O = K(+)(in) + ADP + phosphate + H(+). Part of the high-affinity ATP-driven potassium transport (or Kdp) system, which catalyzes the hydrolysis of ATP coupled with the electrogenic transport of potassium into the cytoplasm. This subunit is responsible for energy coupling to the transport system and for the release of the potassium ions to the cytoplasm. In Staphylococcus aureus (strain MRSA252), this protein is Potassium-transporting ATPase ATP-binding subunit 2.